The sequence spans 233 residues: Probable translation initiation factor, mitochondrial (233 aa).

The transit peptide at 1 to 39 directs the protein to the mitochondrion; the sequence is MNSYLQFPHRKLFIQFSYSLTSVFRKCQSRTFMNSQFAS.

The protein belongs to the IF-3 family.

The protein resides in the mitochondrion. May be involved in mitochondrial translation initiation. This Schizosaccharomyces pombe (strain 972 / ATCC 24843) (Fission yeast) protein is Probable translation initiation factor, mitochondrial.